The sequence spans 150 residues: 3-hydroxyacyl-[acyl-carrier-protein] dehydratase FabZ (150 aa).

His-51 is an active-site residue.

Belongs to the thioester dehydratase family. FabZ subfamily.

It localises to the cytoplasm. It carries out the reaction a (3R)-hydroxyacyl-[ACP] = a (2E)-enoyl-[ACP] + H2O. In terms of biological role, involved in unsaturated fatty acids biosynthesis. Catalyzes the dehydration of short chain beta-hydroxyacyl-ACPs and long chain saturated and unsaturated beta-hydroxyacyl-ACPs. The chain is 3-hydroxyacyl-[acyl-carrier-protein] dehydratase FabZ from Legionella pneumophila subsp. pneumophila (strain Philadelphia 1 / ATCC 33152 / DSM 7513).